The chain runs to 320 residues: Beta-ketoacyl-[acyl-carrier-protein] synthase III (320 aa).

Active-site residues include Cys-112 and His-245. The ACP-binding stretch occupies residues 246-250; the sequence is QANIR. Asn-275 is an active-site residue.

It belongs to the thiolase-like superfamily. FabH family. As to quaternary structure, homodimer.

It is found in the cytoplasm. It catalyses the reaction malonyl-[ACP] + acetyl-CoA + H(+) = 3-oxobutanoyl-[ACP] + CO2 + CoA. It participates in lipid metabolism; fatty acid biosynthesis. Functionally, catalyzes the condensation reaction of fatty acid synthesis by the addition to an acyl acceptor of two carbons from malonyl-ACP. Catalyzes the first condensation reaction which initiates fatty acid synthesis and may therefore play a role in governing the total rate of fatty acid production. Possesses both acetoacetyl-ACP synthase and acetyl transacylase activities. Its substrate specificity determines the biosynthesis of branched-chain and/or straight-chain of fatty acids. This Streptococcus thermophilus (strain CNRZ 1066) protein is Beta-ketoacyl-[acyl-carrier-protein] synthase III.